The sequence spans 269 residues: Formamidopyrimidine-DNA glycosylase (269 aa).

The active-site Schiff-base intermediate with DNA is Pro2. The Proton donor role is filled by Glu3. The active-site Proton donor; for beta-elimination activity is the Lys58. DNA contacts are provided by His91, Arg110, and Lys150. The segment at 235–269 (SVYGCENKTCHFCKSKIIKIVQNQRSTFYCRKCQT) adopts an FPG-type zinc-finger fold. Catalysis depends on Arg259, which acts as the Proton donor; for delta-elimination activity.

This sequence belongs to the FPG family. As to quaternary structure, monomer. The cofactor is Zn(2+).

The enzyme catalyses Hydrolysis of DNA containing ring-opened 7-methylguanine residues, releasing 2,6-diamino-4-hydroxy-5-(N-methyl)formamidopyrimidine.. The catalysed reaction is 2'-deoxyribonucleotide-(2'-deoxyribose 5'-phosphate)-2'-deoxyribonucleotide-DNA = a 3'-end 2'-deoxyribonucleotide-(2,3-dehydro-2,3-deoxyribose 5'-phosphate)-DNA + a 5'-end 5'-phospho-2'-deoxyribonucleoside-DNA + H(+). Involved in base excision repair of DNA damaged by oxidation or by mutagenic agents. Acts as a DNA glycosylase that recognizes and removes damaged bases. Has a preference for oxidized purines, such as 7,8-dihydro-8-oxoguanine (8-oxoG). Has AP (apurinic/apyrimidinic) lyase activity and introduces nicks in the DNA strand. Cleaves the DNA backbone by beta-delta elimination to generate a single-strand break at the site of the removed base with both 3'- and 5'-phosphates. This is Formamidopyrimidine-DNA glycosylase from Ruthia magnifica subsp. Calyptogena magnifica.